A 274-amino-acid polypeptide reads, in one-letter code: 3-methyl-2-oxobutanoate hydroxymethyltransferase (274 aa).

Mg(2+) contacts are provided by Asp44 and Asp83. Residues 44–45 (DS), Asp83, and Lys113 each bind 3-methyl-2-oxobutanoate. A Mg(2+)-binding site is contributed by Glu115. The active-site Proton acceptor is the Glu182.

The protein belongs to the PanB family. Homodecamer; pentamer of dimers. It depends on Mg(2+) as a cofactor.

The protein localises to the cytoplasm. The enzyme catalyses 3-methyl-2-oxobutanoate + (6R)-5,10-methylene-5,6,7,8-tetrahydrofolate + H2O = 2-dehydropantoate + (6S)-5,6,7,8-tetrahydrofolate. Its pathway is cofactor biosynthesis; (R)-pantothenate biosynthesis; (R)-pantoate from 3-methyl-2-oxobutanoate: step 1/2. Catalyzes the reversible reaction in which hydroxymethyl group from 5,10-methylenetetrahydrofolate is transferred onto alpha-ketoisovalerate to form ketopantoate. The protein is 3-methyl-2-oxobutanoate hydroxymethyltransferase of Campylobacter jejuni (strain RM1221).